The following is a 138-amino-acid chain: Acidic phospholipase A2 MVL-PLA2 (138 aa).

Positions 1-16 (MRTLWIVAVCLMGVEG) are cleaved as a signal peptide. 7 disulfide bridges follow: cysteine 42–cysteine 131, cysteine 44–cysteine 60, cysteine 59–cysteine 111, cysteine 65–cysteine 138, cysteine 66–cysteine 104, cysteine 73–cysteine 97, and cysteine 91–cysteine 102. Ca(2+)-binding residues include tyrosine 43, glycine 45, and glycine 47. Histidine 63 is an active-site residue. Residue aspartate 64 participates in Ca(2+) binding. Residues 86–88 (NGD) carry the May inhibit integrin function (Atypical cell attachment site) motif. Aspartate 105 is a catalytic residue.

This sequence belongs to the phospholipase A2 family. Group II subfamily. D49 sub-subfamily. Ca(2+) is required as a cofactor. Expressed by the venom gland.

Its subcellular location is the secreted. It carries out the reaction a 1,2-diacyl-sn-glycero-3-phosphocholine + H2O = a 1-acyl-sn-glycero-3-phosphocholine + a fatty acid + H(+). In terms of biological role, snake venom phospholipase A2 (PLA2) that displays an inhibitory effect, independent from its catalytic activity, on tumor cell adhesion and migration. This effect is mediated via specific inhibition of integrins alpha-5/beta-1 (ITGA5/ITGB1), alpha-v/beta-3 (ITGAV/ITGB3) and alpha-v/beta-6 (ITGAV/ITGB6). PLA2 catalyzes the calcium-dependent hydrolysis of the 2-acyl groups in 3-sn-phosphoglycerides. The chain is Acidic phospholipase A2 MVL-PLA2 from Macrovipera lebetina transmediterranea (Blunt-nosed viper).